The sequence spans 312 residues: Porphobilinogen deaminase (312 aa).

Cys241 is subject to S-(dipyrrolylmethanemethyl)cysteine.

This sequence belongs to the HMBS family. As to quaternary structure, monomer. It depends on dipyrromethane as a cofactor.

It catalyses the reaction 4 porphobilinogen + H2O = hydroxymethylbilane + 4 NH4(+). The protein operates within porphyrin-containing compound metabolism; protoporphyrin-IX biosynthesis; coproporphyrinogen-III from 5-aminolevulinate: step 2/4. Functionally, tetrapolymerization of the monopyrrole PBG into the hydroxymethylbilane pre-uroporphyrinogen in several discrete steps. This Pelotomaculum thermopropionicum (strain DSM 13744 / JCM 10971 / SI) protein is Porphobilinogen deaminase.